The chain runs to 268 residues: Putative cysteine-rich repeat secretory protein 5 (268 aa).

An N-terminal signal peptide occupies residues 1–24 (MTGINTHFAVALFCFFSFSLRAMS). Gnk2-homologous domains are found at residues 27–129 (SQML…NVSF) and 135–248 (DVPS…ISAL).

It belongs to the cysteine-rich repeat secretory protein family.

It localises to the secreted. The polypeptide is Putative cysteine-rich repeat secretory protein 5 (CRRSP5) (Arabidopsis thaliana (Mouse-ear cress)).